Reading from the N-terminus, the 154-residue chain is Low molecular weight protein-tyrosine-phosphatase PtpA (154 aa).

Cys8 serves as the catalytic Nucleophile. Residue Arg14 is part of the active site. Asp120 functions as the Proton donor in the catalytic mechanism.

It belongs to the low molecular weight phosphotyrosine protein phosphatase family.

The enzyme catalyses O-phospho-L-tyrosyl-[protein] + H2O = L-tyrosyl-[protein] + phosphate. Its function is as follows. Dephosphorylates the phosphotyrosine-containing proteins. The protein is Low molecular weight protein-tyrosine-phosphatase PtpA (ptpA) of Staphylococcus epidermidis (strain ATCC 35984 / DSM 28319 / BCRC 17069 / CCUG 31568 / BM 3577 / RP62A).